A 273-amino-acid polypeptide reads, in one-letter code: tRNA pseudouridine synthase A (273 aa).

Aspartate 52 acts as the Nucleophile in catalysis. Tyrosine 110 is a binding site for substrate.

This sequence belongs to the tRNA pseudouridine synthase TruA family. Homodimer.

The catalysed reaction is uridine(38/39/40) in tRNA = pseudouridine(38/39/40) in tRNA. Formation of pseudouridine at positions 38, 39 and 40 in the anticodon stem and loop of transfer RNAs. This is tRNA pseudouridine synthase A from Cupriavidus pinatubonensis (strain JMP 134 / LMG 1197) (Cupriavidus necator (strain JMP 134)).